We begin with the raw amino-acid sequence, 336 residues long: 3-isopropylmalate dehydrogenase (336 aa).

Positions 87, 97, 121, and 211 each coordinate substrate. D211, D235, and D239 together coordinate Mg(2+). 271–283 (GSAPDIAGQGIAD) is an NAD(+) binding site.

Belongs to the isocitrate and isopropylmalate dehydrogenases family. LeuB type 2 subfamily. Homodimer. It depends on Mg(2+) as a cofactor. Requires Mn(2+) as cofactor.

Its subcellular location is the cytoplasm. It carries out the reaction (2R,3S)-3-isopropylmalate + NAD(+) = 4-methyl-2-oxopentanoate + CO2 + NADH. It functions in the pathway amino-acid biosynthesis; L-leucine biosynthesis; L-leucine from 3-methyl-2-oxobutanoate: step 3/4. In terms of biological role, catalyzes the oxidation of 3-carboxy-2-hydroxy-4-methylpentanoate (3-isopropylmalate) to 3-carboxy-4-methyl-2-oxopentanoate. The product decarboxylates to 4-methyl-2 oxopentanoate. The protein is 3-isopropylmalate dehydrogenase (leuB) of Mycobacterium tuberculosis (strain CDC 1551 / Oshkosh).